Here is a 232-residue protein sequence, read N- to C-terminus: 2-C-methyl-D-erythritol 4-phosphate cytidylyltransferase (232 aa).

It belongs to the IspD/TarI cytidylyltransferase family. IspD subfamily.

The enzyme catalyses 2-C-methyl-D-erythritol 4-phosphate + CTP + H(+) = 4-CDP-2-C-methyl-D-erythritol + diphosphate. The protein operates within isoprenoid biosynthesis; isopentenyl diphosphate biosynthesis via DXP pathway; isopentenyl diphosphate from 1-deoxy-D-xylulose 5-phosphate: step 2/6. In terms of biological role, catalyzes the formation of 4-diphosphocytidyl-2-C-methyl-D-erythritol from CTP and 2-C-methyl-D-erythritol 4-phosphate (MEP). The sequence is that of 2-C-methyl-D-erythritol 4-phosphate cytidylyltransferase from Bacillus velezensis (strain DSM 23117 / BGSC 10A6 / LMG 26770 / FZB42) (Bacillus amyloliquefaciens subsp. plantarum).